The chain runs to 275 residues: Light-independent protochlorophyllide reductase iron-sulfur ATP-binding protein (275 aa).

Residues 12 to 17 (GIGKST) and Lys41 contribute to the ATP site. Position 16 (Ser16) interacts with Mg(2+). Residues Cys97 and Cys131 each contribute to the [4Fe-4S] cluster site. ATP is bound at residue 182-183 (NR).

This sequence belongs to the NifH/BchL/ChlL family. In terms of assembly, homodimer. Protochlorophyllide reductase is composed of three subunits; BchL, BchN and BchB. [4Fe-4S] cluster is required as a cofactor.

It carries out the reaction chlorophyllide a + oxidized 2[4Fe-4S]-[ferredoxin] + 2 ADP + 2 phosphate = protochlorophyllide a + reduced 2[4Fe-4S]-[ferredoxin] + 2 ATP + 2 H2O. It participates in porphyrin-containing compound metabolism; bacteriochlorophyll biosynthesis (light-independent). Functionally, component of the dark-operative protochlorophyllide reductase (DPOR) that uses Mg-ATP and reduced ferredoxin to reduce ring D of protochlorophyllide (Pchlide) to form chlorophyllide a (Chlide). This reaction is light-independent. The L component serves as a unique electron donor to the NB-component of the complex, and binds Mg-ATP. This Chlorobium phaeobacteroides (strain DSM 266 / SMG 266 / 2430) protein is Light-independent protochlorophyllide reductase iron-sulfur ATP-binding protein.